The sequence spans 513 residues: MSVSIVLQPGQVTLAQWRALYRGAEVALDDACAAAVLRSAQTVEAIVARGEPVYGVNTGFGKLASVRIEREDLQALQRNIVLSHAAGVGEPTPVPVVRLMMALKLTSLAQGASGVQPDTLALLDAMLRAGITPVVPCQGSVGASGDLAPLSHLAAAMIGVGEAFVGAQRLPAADALAHAQLQPRVLGAKEGLALLNGTQFSTACALAGLFEIETVLQAALVTGALSVEAAKGSDTPFDARIHALRGQPGQIATAAALRALMADSAIRESHRLGDVRVQDPYCLRCQPQVMGAALDVMRQAARTLEIEANGVSDNPLVFSDTGEALSGGNFHAEPVAFAADMLAMAVCEIGSISERRTAMLVDPALSGLPAFLTPRPGLNSGFMIPQVTAAALVSENKQRAYPASVDSIPTSANQEDHVSMAAHGARRLLAMAENAAHVIGIELLAAVQGCDFHAPLRSSTALEAARALLRAQVPTLQDDRYFHPDMLAASALVRSGALAQTVAIPLPGVEQDV.

Residues 143 to 145 constitute a cross-link (5-imidazolinone (Ala-Gly)); sequence ASG. Ser-144 bears the 2,3-didehydroalanine (Ser) mark.

Belongs to the PAL/histidase family. Post-translationally, contains an active site 4-methylidene-imidazol-5-one (MIO), which is formed autocatalytically by cyclization and dehydration of residues Ala-Ser-Gly.

Its subcellular location is the cytoplasm. The catalysed reaction is L-histidine = trans-urocanate + NH4(+). It participates in amino-acid degradation; L-histidine degradation into L-glutamate; N-formimidoyl-L-glutamate from L-histidine: step 1/3. The sequence is that of Histidine ammonia-lyase from Xanthomonas axonopodis pv. citri (strain 306).